Here is a 211-residue protein sequence, read N- to C-terminus: Thymidylate kinase (211 aa).

11–18 (GPDGAGKT) is an ATP binding site.

It belongs to the thymidylate kinase family.

The catalysed reaction is dTMP + ATP = dTDP + ADP. Phosphorylation of dTMP to form dTDP in both de novo and salvage pathways of dTTP synthesis. The chain is Thymidylate kinase from Streptococcus equi subsp. equi (strain 4047).